Here is a 172-residue protein sequence, read N- to C-terminus: 3-hydroxydecanoyl-[acyl-carrier-protein] dehydratase (172 aa).

Residue His71 is part of the active site.

It belongs to the thioester dehydratase family. FabA subfamily. As to quaternary structure, homodimer.

It localises to the cytoplasm. The catalysed reaction is a (3R)-hydroxyacyl-[ACP] = a (2E)-enoyl-[ACP] + H2O. It catalyses the reaction (3R)-hydroxydecanoyl-[ACP] = (2E)-decenoyl-[ACP] + H2O. It carries out the reaction (2E)-decenoyl-[ACP] = (3Z)-decenoyl-[ACP]. It functions in the pathway lipid metabolism; fatty acid biosynthesis. Necessary for the introduction of cis unsaturation into fatty acids. Catalyzes the dehydration of (3R)-3-hydroxydecanoyl-ACP to E-(2)-decenoyl-ACP and then its isomerization to Z-(3)-decenoyl-ACP. Can catalyze the dehydratase reaction for beta-hydroxyacyl-ACPs with saturated chain lengths up to 16:0, being most active on intermediate chain length. This is 3-hydroxydecanoyl-[acyl-carrier-protein] dehydratase from Klebsiella pneumoniae (strain 342).